The sequence spans 140 residues: 3-hydroxyacyl-[acyl-carrier-protein] dehydratase FabZ (140 aa).

His48 is an active-site residue.

It belongs to the thioester dehydratase family. FabZ subfamily.

It is found in the cytoplasm. The catalysed reaction is a (3R)-hydroxyacyl-[ACP] = a (2E)-enoyl-[ACP] + H2O. In terms of biological role, involved in unsaturated fatty acids biosynthesis. Catalyzes the dehydration of short chain beta-hydroxyacyl-ACPs and long chain saturated and unsaturated beta-hydroxyacyl-ACPs. This chain is 3-hydroxyacyl-[acyl-carrier-protein] dehydratase FabZ, found in Latilactobacillus sakei subsp. sakei (strain 23K) (Lactobacillus sakei subsp. sakei).